A 957-amino-acid chain; its full sequence is Glycine dehydrogenase (decarboxylating) (957 aa).

Position 708 is an N6-(pyridoxal phosphate)lysine (K708).

This sequence belongs to the GcvP family. The glycine cleavage system is composed of four proteins: P, T, L and H. Requires pyridoxal 5'-phosphate as cofactor.

The catalysed reaction is N(6)-[(R)-lipoyl]-L-lysyl-[glycine-cleavage complex H protein] + glycine + H(+) = N(6)-[(R)-S(8)-aminomethyldihydrolipoyl]-L-lysyl-[glycine-cleavage complex H protein] + CO2. The glycine cleavage system catalyzes the degradation of glycine. The P protein binds the alpha-amino group of glycine through its pyridoxal phosphate cofactor; CO(2) is released and the remaining methylamine moiety is then transferred to the lipoamide cofactor of the H protein. The polypeptide is Glycine dehydrogenase (decarboxylating) (Escherichia coli O81 (strain ED1a)).